A 691-amino-acid chain; its full sequence is Competence protein ComA (691 aa).

6 helical membrane passes run 183–203 (HLVS…AWLA), 220–240 (WVLA…GFSV), 280–300 (LAVL…LIWA), 322–342 (VLSL…SPLV), 347–367 (IPWF…VPFA), and 396–416 (VAAA…LLLL).

To B.subtilis ComEC, H.influenzae REC2, and E.coli YcaI.

The protein resides in the cell inner membrane. Essential for natural transformation. Could be a transporter involved in DNA uptake. This is Competence protein ComA (comA) from Neisseria gonorrhoeae.